A 328-amino-acid chain; its full sequence is 4-hydroxythreonine-4-phosphate dehydrogenase (328 aa).

Residues His-134 and Thr-135 each coordinate substrate. Residues His-164, His-209, and His-265 each contribute to the a divalent metal cation site. Lys-273, Asn-282, and Arg-291 together coordinate substrate.

This sequence belongs to the PdxA family. As to quaternary structure, homodimer. Zn(2+) is required as a cofactor. It depends on Mg(2+) as a cofactor. Co(2+) serves as cofactor.

Its subcellular location is the cytoplasm. It catalyses the reaction 4-(phosphooxy)-L-threonine + NAD(+) = 3-amino-2-oxopropyl phosphate + CO2 + NADH. It participates in cofactor biosynthesis; pyridoxine 5'-phosphate biosynthesis; pyridoxine 5'-phosphate from D-erythrose 4-phosphate: step 4/5. In terms of biological role, catalyzes the NAD(P)-dependent oxidation of 4-(phosphooxy)-L-threonine (HTP) into 2-amino-3-oxo-4-(phosphooxy)butyric acid which spontaneously decarboxylates to form 3-amino-2-oxopropyl phosphate (AHAP). This chain is 4-hydroxythreonine-4-phosphate dehydrogenase, found in Vibrio vulnificus (strain YJ016).